The chain runs to 349 residues: Two pore potassium channel b (349 aa).

The interval 1-53 (MAALDQQPLLHDGGDQKPPPEGAARRFRRCRTAPSSEPPPTDKDNSSAADAPP) is disordered. The Cytoplasmic segment spans residues 1 to 66 (MAALDQQPLL…FTGGGRPSFR (66 aa)). Residues 67–87 (LVGLLLVAYLLLGTIAFYLAM) traverse the membrane as a helical segment. Residues 100–119 (DALYFCVVTMTTVGYGDLVP) constitute an intramembrane region (pore-forming). Residues 123 to 143 (AAKLLACAFVFAGVAVVGTFL) traverse the membrane as a helical segment. Residues 144–180 (SKAADYLVEKQEALLFRALHSHTMVRAMEMNKVRYKL) lie on the Cytoplasmic side of the membrane. The helical transmembrane segment at 181-201 (YTAGLLLVAAVASGTVVLWKV) threads the bilayer. An intramembrane region (pore-forming) is located at residues 208–227 (DAFYCVCATVTTLGYGDRSF). A helical membrane pass occupies residues 234–254 (AFAVAWITVSTVVVALFFLYA). Residues 255-349 (AELYTERRQR…PTPDPPPSLR (95 aa)) are Cytoplasmic-facing. EF-hand domains follow at residues 271-306 (LRRR…ELGK) and 310-345 (EDIS…PDPP). Residues aspartate 284, aspartate 286, aspartate 288, arginine 290, aspartate 295, aspartate 323, aspartate 325, serine 327, threonine 329, and aspartate 334 each contribute to the Ca(2+) site. Positions 326–349 (HSGTLSPADLAAAQPTPDPPPSLR) are disordered.

The protein belongs to the two pore domain potassium channel (TC 1.A.1.7) family. In terms of assembly, homodimer.

Its subcellular location is the vacuole membrane. Functionally, highly selective inward-rectifying potassium channel that is specifically located in the tonoplast of protein storage vacuoles. Functions independently of the voltage difference across the membrane. This is Two pore potassium channel b (TPKB) from Oryza sativa subsp. japonica (Rice).